Reading from the N-terminus, the 274-residue chain is uncharacterized protein (274 aa).

A helical transmembrane segment spans residues 238–258; that stretch reads ILSVQVIFATVIALIAISVFC.

The protein localises to the membrane. This is an uncharacterized protein from Schizosaccharomyces pombe (strain 972 / ATCC 24843) (Fission yeast).